Reading from the N-terminus, the 181-residue chain is High mobility group protein B4 (181 aa).

The segment at residues 9–79 (PKVNVSSYIH…RYQQEMMNYI (71 aa)) is a DNA-binding region (HMG box 1). Basic residues predominate over residues 80–89 (GKRRKRRKRD). A disordered region spans residues 80 to 100 (GKRRKRRKRDPKAPRKPPSSF). The HMG box 2 DNA-binding region spans 93 to 161 (PRKPPSSFLL…KYFEEQEAYR (69 aa)).

This sequence belongs to the HMGB family. As to expression, expressed in adult germ cells (at protein level).

Its subcellular location is the nucleus. The protein localises to the chromosome. This chain is High mobility group protein B4 (Hmgb4), found in Mus musculus (Mouse).